A 104-amino-acid chain; its full sequence is uncharacterized protein (104 aa).

This is an uncharacterized protein from Treponema pallidum (strain Nichols).